A 327-amino-acid chain; its full sequence is Autoinducer 2 import system permease protein LsrD (327 aa).

Transmembrane regions (helical) follow at residues 3–23 (LNWETTLLILLVLEILLFGAI), 41–61 (ICIGIVALPLTLVIISGGIDI), 63–83 (LGSTIGLCAIALGVMMQFGLP), 86–106 (LAVPLTLLLGLLCGLFNAALI), 114–134 (LVITLGTLYLYGGGALLLSGL), 158–178 (VLGLPIPLVLFAVITFFFWLI), 211–231 (ALYGLVGVASAIAALVMVSYF), 257–277 (IYGGSGSVIGTALAALLVGYL), and 283–303 (MVGIPNQVSSALSGALLVVVV).

Belongs to the binding-protein-dependent transport system permease family. AraH/RbsC subfamily. As to quaternary structure, the complex is composed of two ATP-binding proteins (LsrA), two transmembrane proteins (LsrC and LsrD) and a solute-binding protein (LsrB).

The protein resides in the cell inner membrane. Functionally, part of the ABC transporter complex LsrABCD involved in autoinducer 2 (AI-2) import. Probably responsible for the translocation of the substrate across the membrane. The sequence is that of Autoinducer 2 import system permease protein LsrD (lsrD) from Enterobacter sp. (strain 638).